A 303-amino-acid polypeptide reads, in one-letter code: Serine/threonine-protein phosphatase PP-X homolog 1 (303 aa).

The Mn(2+) site is built by Asp51, His53, Asp79, and Asn111. His112 serves as the catalytic Proton donor. Mn(2+) contacts are provided by His161 and His235.

It belongs to the PPP phosphatase family. PP-4 (PP-X) subfamily. Mn(2+) is required as a cofactor.

It carries out the reaction O-phospho-L-seryl-[protein] + H2O = L-seryl-[protein] + phosphate. The enzyme catalyses O-phospho-L-threonyl-[protein] + H2O = L-threonyl-[protein] + phosphate. In Paramecium tetraurelia, this protein is Serine/threonine-protein phosphatase PP-X homolog 1 (Ppx1).